A 373-amino-acid polypeptide reads, in one-letter code: Core trichothecene cluster (CTC) protein 14 (373 aa).

This sequence belongs to the TRI14 family.

In terms of biological role, part of the core gene cluster that mediates the biosynthesis of trichothecenes, a very large family of chemically related bicyclic sesquiterpene compounds acting as mycotoxins, including T2-toxin. The biosynthesis of trichothecenes begins with the cyclization of farnesyl diphosphate to trichodiene and is catalyzed by the trichodiene synthase TRI5. Trichodiene undergoes a series of oxygenations catalyzed by the cytochrome P450 monooxygenase TRI4. TRI4 controls the addition of four oxygens at C-2, C-3, C-11, and the C-12, C-13-epoxide to form the intermediate isotrichotriol. Isotrichotriol then undergoes a non-enzymatic isomerization and cyclization to form isotrichodermol. During this process, the oxygen at the C-2 position becomes the pyran ring oxygen and the hydroxyl group at C-11 is lost. More complex type A trichothecenes are built by modifying isotrichodermol through a series of paired hydroxylation and acetylation or acylation steps. Isotrichodermol is converted to isotrichodermin by the acetyltransferase TRI101. TRI101 encodes a C-3 transacetylase that acts as a self-protection or resistance factor during biosynthesis and that the presence of a free C-3 hydroxyl group is a key component of Fusarium trichothecene phytotoxicity. A second hydroxyl group is added to C-15 by the trichothecene C-15 hydroxylase TRI11, producing 15-decalonectrin, which is then acetylated by TRI3, producing calonectrin. A third hydroxyl group is added at C-4 by the cytochrome P450 monooxygenase TRI13, converting calonectrin to 3,15-diacetoxyspirpenol, which is subsequently acetylated bythe acetyltransferase TRI7. A fourth hydroxyl group is added to C-8 by the cytochrome P450 monooxygenase TRI1, followed by the addition of an isovaleryl moiety by TRI16. Finally, the acetyl group is removed from the C-3 position by the trichothecene C-3 esterase TRI8 to produce T-2 toxin. The protein is Core trichothecene cluster (CTC) protein 14 of Fusarium sporotrichioides.